The sequence spans 203 residues: Probable GTP-binding protein EngB (203 aa).

The EngB-type G domain occupies 1–190 (MPEIVLVGRS…LEALQERVRK (190 aa)). Residues 8-15 (GRSNVGKS), 35-39 (GVTRK), 53-56 (DMPG), 132-135 (NKID), and 169-171 (ISA) contribute to the GTP site. Ser15 and Thr37 together coordinate Mg(2+).

This sequence belongs to the TRAFAC class TrmE-Era-EngA-EngB-Septin-like GTPase superfamily. EngB GTPase family. Mg(2+) serves as cofactor.

Its function is as follows. Necessary for normal cell division and for the maintenance of normal septation. The chain is Probable GTP-binding protein EngB from Methanopyrus kandleri (strain AV19 / DSM 6324 / JCM 9639 / NBRC 100938).